Here is a 362-residue protein sequence, read N- to C-terminus: E3 ubiquitin-protein ligase TM129 (362 aa).

Residues 1–6 (MDSPEV) lie on the Lumenal side of the membrane. The helical transmembrane segment at 7-27 (TFTLAYLVFAVCFVFTPNEFH) threads the bilayer. At 28–56 (AAGLTVQNLLSGWLGSEDAAFVPFHLRRT) the chain is on the cytoplasmic side. The chain crosses the membrane as a helical span at residues 57–77 (AATLLCHSLLPLGYYVGMCLA). Residues 78–94 (ASEKRLHALSQAPEAWR) are Lumenal-facing. Residues 95–115 (LFLLLAVTLPSIACILIYYWS) form a helical membrane-spanning segment. Residues 116–362 (RDRWACHPLA…FCILDVCTVR (247 aa)) lie on the Cytoplasmic side of the membrane. An RING-type; degenerate zinc finger spans residues 285–350 (CIGCMQTRAS…ASRVPCPTCR (66 aa)).

Belongs to the TMEM129 family. In terms of assembly, integral component of ER-resident dislocation complexes.

It is found in the endoplasmic reticulum membrane. It catalyses the reaction S-ubiquitinyl-[E2 ubiquitin-conjugating enzyme]-L-cysteine + [acceptor protein]-L-lysine = [E2 ubiquitin-conjugating enzyme]-L-cysteine + N(6)-ubiquitinyl-[acceptor protein]-L-lysine.. It participates in protein modification; protein ubiquitination. E3 ubiquitin-protein ligase involved in ER-associated protein degradation, preferentially associates with the E2 enzyme UBE2J2. Exploited by viral US11 proteins to mediate HLA class I proteins degradation. This is E3 ubiquitin-protein ligase TM129 (TMEM129) from Homo sapiens (Human).